Here is a 419-residue protein sequence, read N- to C-terminus: L-rhamnose isomerase (419 aa).

The Mn(2+) site is built by histidine 262, aspartate 294, and aspartate 296.

The protein belongs to the rhamnose isomerase family. Homotetramer. It depends on Mn(2+) as a cofactor.

It localises to the cytoplasm. The catalysed reaction is L-rhamnopyranose = L-rhamnulose. It functions in the pathway carbohydrate degradation; L-rhamnose degradation; glycerone phosphate from L-rhamnose: step 1/3. Its function is as follows. Catalyzes the interconversion of L-rhamnose and L-rhamnulose. The protein is L-rhamnose isomerase of Escherichia coli O6:H1 (strain CFT073 / ATCC 700928 / UPEC).